The sequence spans 131 residues: Interleukin-13 (131 aa).

The signal sequence occupies residues 1–18 (MALWLTVVIALTCLGGLA). Asn38, Asn48, Asn56, and Asn71 each carry an N-linked (GlcNAc...) asparagine glycan. Intrachain disulfides connect Cys47-Cys75 and Cys63-Cys89.

The protein belongs to the IL-4/IL-13 family. As to quaternary structure, interacts with IL13RA2.

It localises to the secreted. In terms of biological role, cytokine that plays important roles in allergic inflammation and immune response to parasite infection. Synergizes with IL2 in regulating interferon-gamma synthesis. Stimulates B-cell proliferation, and activation of eosinophils, basophils, and mast cells. Plays an important role in controlling IL33 activity by modulating the production of transmembrane and soluble forms of interleukin-1 receptor-like 1/IL1RL1. Displays the capacity to antagonize Th1-driven proinflammatory immune response and downregulates synthesis of many proinflammatory cytokines including IL1, IL6, IL10, IL12 and TNF-alpha through a mechanism that partially involves suppression of NF-kappa-B. Also functions on nonhematopoietic cells, including endothelial cells where it induces vascular cell adhesion protein 1/VCAM1, which is important in the recruitment of eosinophils. Exerts its biological effects through its receptors which comprises the IL4R chain and the IL13RA1 chain, to activate JAK1 and TYK2, leading to the activation of STAT6. Aside from IL13RA1, another receptor IL13RA2 acts as a high affinity decoy for IL13 and mediates internalization and depletion of extracellular IL13. The polypeptide is Interleukin-13 (IL13) (Canis lupus familiaris (Dog)).